The primary structure comprises 345 residues: Phosphoribosylformylglycinamidine cyclo-ligase (345 aa).

It belongs to the AIR synthase family.

It is found in the cytoplasm. It catalyses the reaction 2-formamido-N(1)-(5-O-phospho-beta-D-ribosyl)acetamidine + ATP = 5-amino-1-(5-phospho-beta-D-ribosyl)imidazole + ADP + phosphate + H(+). Its pathway is purine metabolism; IMP biosynthesis via de novo pathway; 5-amino-1-(5-phospho-D-ribosyl)imidazole from N(2)-formyl-N(1)-(5-phospho-D-ribosyl)glycinamide: step 2/2. This is Phosphoribosylformylglycinamidine cyclo-ligase from Shewanella baltica (strain OS223).